Reading from the N-terminus, the 78-residue chain is Small ribosomal subunit protein bS20 (78 aa).

Belongs to the bacterial ribosomal protein bS20 family.

Functionally, binds directly to 16S ribosomal RNA. This chain is Small ribosomal subunit protein bS20, found in Streptococcus pneumoniae serotype 4 (strain ATCC BAA-334 / TIGR4).